We begin with the raw amino-acid sequence, 211 residues long: uncharacterized protein (211 aa).

The first 27 residues, 1–27 (MKRTSAALVVFLILLFLGLLFLPMFIV), serve as a signal peptide directing secretion.

This is an uncharacterized protein from Archaeoglobus fulgidus (strain ATCC 49558 / DSM 4304 / JCM 9628 / NBRC 100126 / VC-16).